We begin with the raw amino-acid sequence, 223 residues long: Small ribosomal subunit protein uS3 (223 aa).

Residues 39–108 (IRNFVKKNSY…NILINIVEVK (70 aa)) enclose the KH type-2 domain.

Belongs to the universal ribosomal protein uS3 family. Part of the 30S ribosomal subunit. Forms a tight complex with proteins S10 and S14.

Functionally, binds the lower part of the 30S subunit head. Binds mRNA in the 70S ribosome, positioning it for translation. The sequence is that of Small ribosomal subunit protein uS3 from Clostridium botulinum (strain Kyoto / Type A2).